A 485-amino-acid polypeptide reads, in one-letter code: Ribosomal protein uS12 methylthiotransferase RimO (485 aa).

Residues 19–135 enclose the MTTase N-terminal domain; it reads VKVGFISLGC…IGEVVAGILA (117 aa). [4Fe-4S] cluster-binding residues include Cys-28, Cys-64, Cys-98, Cys-172, Cys-176, and Cys-179. Positions 158-387 constitute a Radical SAM core domain; it reads ATPGYTAYLK…MEVQQEIARR (230 aa). In terms of domain architecture, TRAM spans 390–461; the sequence is QLQVGRELEV…DYDLLGEATE (72 aa).

Belongs to the methylthiotransferase family. RimO subfamily. [4Fe-4S] cluster serves as cofactor.

The protein localises to the cytoplasm. It catalyses the reaction L-aspartate(89)-[ribosomal protein uS12]-hydrogen + (sulfur carrier)-SH + AH2 + 2 S-adenosyl-L-methionine = 3-methylsulfanyl-L-aspartate(89)-[ribosomal protein uS12]-hydrogen + (sulfur carrier)-H + 5'-deoxyadenosine + L-methionine + A + S-adenosyl-L-homocysteine + 2 H(+). Its function is as follows. Catalyzes the methylthiolation of an aspartic acid residue of ribosomal protein uS12. This is Ribosomal protein uS12 methylthiotransferase RimO from Symbiobacterium thermophilum (strain DSM 24528 / JCM 14929 / IAM 14863 / T).